Reading from the N-terminus, the 256-residue chain is MASGWFYMSCMVLGSLGSMCILFTTYWMQYWRGGFAWDGTVLMFNWHPVLMVSGMVVLYGAASLVYRLPASWVGPKLPWKVLHAALHLLAFTVTVVGLTAVFGFHNHSKITHLYSLHSWLGITTVALFACQWFLGFAVFLLPWASQWLRSLLKPVHVFFGACILSLSIASVISGINEKLFFVLKNATRPYSSLPGEAVFANSTGILVVSFGLLVLYILLASSWRRPDPGALTDRQVWLLVSHYRWDKAKKACFAPC.

The Cytoplasmic portion of the chain corresponds to 1–3 (MAS). Residues 4-24 (GWFYMSCMVLGSLGSMCILFT) traverse the membrane as a helical segment. The region spanning 12-219 (VLGSLGSMCI…FGLLVLYILL (208 aa)) is the Cytochrome b561 domain. The Lumenal segment spans residues 25-40 (TYWMQYWRGGFAWDGT). The helical transmembrane segment at 41–61 (VLMFNWHPVLMVSGMVVLYGA) threads the bilayer. Heme b contacts are provided by H47 and R67. Over 62 to 83 (ASLVYRLPASWVGPKLPWKVLH) the chain is Cytoplasmic. L-ascorbate is bound by residues K76 and K80. H83 lines the heme b pocket. A helical transmembrane segment spans residues 84–104 (AALHLLAFTVTVVGLTAVFGF). Topologically, residues 105–119 (HNHSKITHLYSLHSW) are lumenal. The N-linked (GlcNAc...) asparagine glycan is linked to N106. Heme b is bound by residues 112–115 (HLYS) and H117. A helical membrane pass occupies residues 120-140 (LGITTVALFACQWFLGFAVFL). Residues 141-154 (LPWASQWLRSLLKP) are Cytoplasmic-facing. R149 is a binding site for L-ascorbate. A helical transmembrane segment spans residues 155 to 175 (VHVFFGACILSLSIASVISGI). The heme b site is built by H156 and E177. Over 176–202 (NEKLFFVLKNATRPYSSLPGEAVFANS) the chain is Lumenal. Residues 203-223 (TGILVVSFGLLVLYILLASSW) form a helical membrane-spanning segment. R224 is a heme b binding site. Topologically, residues 224–256 (RRPDPGALTDRQVWLLVSHYRWDKAKKACFAPC) are cytoplasmic.

In terms of assembly, homodimer. Requires heme b as cofactor. Post-translationally, N-glycosylated.

It is found in the late endosome membrane. The protein localises to the lysosome membrane. The enzyme catalyses Fe(3+)(out) + L-ascorbate(in) = monodehydro-L-ascorbate radical(in) + Fe(2+)(out) + H(+). Transmembrane reductase that uses ascorbate as an electron donor in the cytoplasm and transfers electrons across membranes to reduce iron cations Fe(3+) into Fe(2+) in the lumen of the late endosome and lysosome. Reduced iron can then be extruded from the late endosome and lysosome to the cytoplasm by divalent metal-specific transporters. It is therefore most probably involved in endosomal and lysosomal cellular iron homeostasis. This is Lysosomal membrane ascorbate-dependent ferrireductase CYB561A3 from Rattus norvegicus (Rat).